Consider the following 919-residue polypeptide: Isoleucine--tRNA ligase (919 aa).

A 'HIGH' region motif is present at residues 57–67 (PYANGNIHIGH). Glu569 is an L-isoleucyl-5'-AMP binding site. Residues 610-614 (KMSKS) carry the 'KMSKS' region motif. Lys613 contacts ATP. Zn(2+) is bound by residues Cys896, Cys899, Cys911, and Cys914.

Belongs to the class-I aminoacyl-tRNA synthetase family. IleS type 1 subfamily. Monomer. Zn(2+) is required as a cofactor.

It is found in the cytoplasm. It catalyses the reaction tRNA(Ile) + L-isoleucine + ATP = L-isoleucyl-tRNA(Ile) + AMP + diphosphate. Functionally, catalyzes the attachment of isoleucine to tRNA(Ile). As IleRS can inadvertently accommodate and process structurally similar amino acids such as valine, to avoid such errors it has two additional distinct tRNA(Ile)-dependent editing activities. One activity is designated as 'pretransfer' editing and involves the hydrolysis of activated Val-AMP. The other activity is designated 'posttransfer' editing and involves deacylation of mischarged Val-tRNA(Ile). This Aliarcobacter butzleri (strain RM4018) (Arcobacter butzleri) protein is Isoleucine--tRNA ligase.